Here is a 1641-residue protein sequence, read N- to C-terminus: Lysine-specific demethylase 6B (1641 aa).

Disordered regions lie at residues 42 to 89, 188 to 682, 704 to 808, and 824 to 1085; these read LPGG…LHGK, YGAK…PLED, LDES…LLKS, and GAAV…VSRA. Low complexity predominate over residues 214–223; the sequence is LSGPSGEEGL. Residue Ser224 is modified to Phosphoserine. Residues 242–268 show a composition bias toward pro residues; that stretch reads PGLPLPPPPPPPPPPPPPPPPPPPPLP. The segment covering 293 to 309 has biased composition (basic and acidic residues); that stretch reads GPERKGSAPPERQEQRH. The span at 312-326 shows a compositional bias: low complexity; it reads PHSYPYPAPAYSAHP. Over residues 361–372 the composition is skewed to basic and acidic residues; sequence DLRESRVQRSRM. Residues 396–415 show a composition bias toward low complexity; sequence PGTSSSSSSSSSSNNTGLRG. Positions 467–488 are enriched in pro residues; it reads PGTPSSPPPPCPRLLRPPPPPA. Low complexity predominate over residues 552 to 568; that stretch reads TTTSSSSSSNSHSSSPT. Composition is skewed to pro residues over residues 597–613 and 645–660; these read QDPP…PAPP and GPPP…PVPP. Over residues 704-713 the composition is skewed to basic and acidic residues; sequence LDESIRKEEE. Low complexity predominate over residues 743 to 766; sequence TAPATTTAAPTTATTTTTTTTTTT. Pro residues predominate over residues 774–801; the sequence is PPALPPPPPLAKFPPPPQPQPPPPPPAS. The span at 855–879 shows a compositional bias: low complexity; that stretch reads VAPSAQGSPKPSVSSSSQFSTSGGP. Over residues 891 to 908 the composition is skewed to pro residues; that stretch reads APGPVTPAQLPPPLPLPP. Basic and acidic residues predominate over residues 918–931; that stretch reads EISRACETLVERVG. Residues 974–987 are compositionally biased toward basic residues; it reads GKRRQKEHRRHRRA. The segment covering 988–1001 has biased composition (basic and acidic residues); sequence CRDSVGRRPREGRA. Residues 1002-1014 show a composition bias toward basic residues; sequence KAKAKAPKEKSRR. Residues 1047-1066 show a composition bias toward pro residues; the sequence is APAPPPAPAPAAQPTPPSAP. Lys1107 is covalently cross-linked (Glycyl lysine isopeptide (Lys-Gly) (interchain with G-Cter in SUMO2)). The segment at 1286–1323 is disordered; the sequence is FQESLQEERESEDEESEEPDSTTGTSPSSAPDPKNHHI. The segment covering 1294 to 1305 has biased composition (acidic residues); that stretch reads RESEDEESEEPD. Residues 1306–1317 are compositionally biased toward low complexity; sequence STTGTSPSSAPD. One can recognise a JmjC domain in the interval 1337–1500; that stretch reads RWKPQLQELL…YQLALERYEW (164 aa). Residues His1388, Glu1390, and His1468 each contribute to the Fe cation site. Zn(2+)-binding residues include Cys1573, Cys1576, Cys1600, and Cys1603.

It belongs to the UTX family. As to quaternary structure, interacts with TLE1. Component of the MLL4 complex, at least composed of KMT2B/MLL4, ASH2L, RBBP5, WDR5, and KDM6B. Interacts with TBX21, SMARCA4, SMARCC1 and SMARCC2. Requires L-ascorbate as cofactor. The cofactor is Fe(2+).

The protein localises to the nucleus. The enzyme catalyses N(6),N(6),N(6)-trimethyl-L-lysyl(27)-[histone H3] + 2 2-oxoglutarate + 2 O2 = N(6)-methyl-L-lysyl(27)-[histone H3] + 2 formaldehyde + 2 succinate + 2 CO2. Histone demethylase that specifically demethylates 'Lys-27' of histone H3, thereby playing a central role in histone code. Demethylates trimethylated and dimethylated H3 'Lys-27'. Plays a central role in regulation of posterior development, by regulating HOX gene expression. Involved in inflammatory response by participating in macrophage differentiation in case of inflammation by regulating gene expression and macrophage differentiation. Plays a demethylase-independent role in chromatin remodeling to regulate T-box family member-dependent gene expression by acting as a link between T-box factors and the SMARCA4-containing SWI/SNF remodeling complex. In Mus musculus (Mouse), this protein is Lysine-specific demethylase 6B (Kdm6b).